The following is a 390-amino-acid chain: S-adenosylmethionine synthase 2 (390 aa).

Glutamate 9 provides a ligand contact to Mg(2+). Residue histidine 15 participates in ATP binding. Position 43 (glutamate 43) interacts with K(+). The L-methionine site is built by glutamate 56 and glutamine 99. ATP is bound by residues 167-169 (DGK), 235-238 (SGRF), aspartate 246, 252-253 (RK), alanine 269, lysine 273, and lysine 277. Aspartate 246 serves as a coordination point for L-methionine. Residue lysine 277 coordinates L-methionine.

This sequence belongs to the AdoMet synthase family. In terms of assembly, homotetramer. It depends on Mn(2+) as a cofactor. Requires Mg(2+) as cofactor. The cofactor is Co(2+). K(+) is required as a cofactor.

Its subcellular location is the cytoplasm. It catalyses the reaction L-methionine + ATP + H2O = S-adenosyl-L-methionine + phosphate + diphosphate. It functions in the pathway amino-acid biosynthesis; S-adenosyl-L-methionine biosynthesis; S-adenosyl-L-methionine from L-methionine: step 1/1. Its function is as follows. Catalyzes the formation of S-adenosylmethionine from methionine and ATP. The reaction comprises two steps that are both catalyzed by the same enzyme: formation of S-adenosylmethionine (AdoMet) and triphosphate, and subsequent hydrolysis of the triphosphate. The chain is S-adenosylmethionine synthase 2 (SAM2) from Petunia hybrida (Petunia).